Reading from the N-terminus, the 180-residue chain is Crossover junction endodeoxyribonuclease RuvC (180 aa).

Residues Asp7, Glu66, and Asp138 contribute to the active site. Mg(2+) contacts are provided by Asp7, Glu66, and Asp138.

The protein belongs to the RuvC family. Homodimer which binds Holliday junction (HJ) DNA. The HJ becomes 2-fold symmetrical on binding to RuvC with unstacked arms; it has a different conformation from HJ DNA in complex with RuvA. In the full resolvosome a probable DNA-RuvA(4)-RuvB(12)-RuvC(2) complex forms which resolves the HJ. It depends on Mg(2+) as a cofactor.

The protein resides in the cytoplasm. It catalyses the reaction Endonucleolytic cleavage at a junction such as a reciprocal single-stranded crossover between two homologous DNA duplexes (Holliday junction).. The RuvA-RuvB-RuvC complex processes Holliday junction (HJ) DNA during genetic recombination and DNA repair. Endonuclease that resolves HJ intermediates. Cleaves cruciform DNA by making single-stranded nicks across the HJ at symmetrical positions within the homologous arms, yielding a 5'-phosphate and a 3'-hydroxyl group; requires a central core of homology in the junction. The consensus cleavage sequence is 5'-(A/T)TT(C/G)-3'. Cleavage occurs on the 3'-side of the TT dinucleotide at the point of strand exchange. HJ branch migration catalyzed by RuvA-RuvB allows RuvC to scan DNA until it finds its consensus sequence, where it cleaves and resolves the cruciform DNA. This chain is Crossover junction endodeoxyribonuclease RuvC, found in Burkholderia pseudomallei (strain 668).